The sequence spans 94 residues: Large ribosomal subunit protein uL23 (94 aa).

It belongs to the universal ribosomal protein uL23 family. Part of the 50S ribosomal subunit. Contacts protein L29, and trigger factor when it is bound to the ribosome.

Functionally, one of the early assembly proteins it binds 23S rRNA. One of the proteins that surrounds the polypeptide exit tunnel on the outside of the ribosome. Forms the main docking site for trigger factor binding to the ribosome. In Dehalococcoides mccartyi (strain ATCC BAA-2266 / KCTC 15142 / 195) (Dehalococcoides ethenogenes (strain 195)), this protein is Large ribosomal subunit protein uL23.